Here is a 140-residue protein sequence, read N- to C-terminus: Neuropeptide CCHamide-2 (140 aa).

Positions 1-22 (MAQMYLAVTIIALLAISHGVSA) are cleaved as a signal peptide. A disulfide bridge connects residues C26 and C33. H37 carries the post-translational modification Histidine amide. A propeptide spanning residues 41–140 (SGDTSAMDQL…PDDGYYIESL (100 aa)) is cleaved from the precursor.

As to expression, expressed in corpora cardiaca (CC), corpora allata (CA), antennal lobe (AL) and gnathal ganglion (GNG) (at protein level). Expression detected in few animals (at protein level).

It is found in the secreted. In terms of biological role, ligand for the CCHamide-2 receptor CCHa2-R. This Agrotis ipsilon (Black cutworm moth) protein is Neuropeptide CCHamide-2.